The chain runs to 60 residues: Small ribosomal subunit protein uS10 (60 aa).

It belongs to the universal ribosomal protein uS10 family.

The polypeptide is Small ribosomal subunit protein uS10 (RPS20) (Zea mays (Maize)).